The following is a 199-amino-acid chain: Mediator of RNA polymerase II transcription subunit 10 (199 aa).

It belongs to the Mediator complex subunit 10 family. Component of the Mediator complex.

Its subcellular location is the nucleus. Component of the Mediator complex, a coactivator involved in the regulated transcription of nearly all RNA polymerase II-dependent genes. Mediator functions as a bridge to convey information from gene-specific regulatory proteins to the basal RNA polymerase II transcription machinery. Mediator is recruited to promoters by direct interactions with regulatory proteins and serves as a scaffold for the assembly of a functional preinitiation complex with RNA polymerase II and the general transcription factors. The chain is Mediator of RNA polymerase II transcription subunit 10 (NUT2) from Candida glabrata (strain ATCC 2001 / BCRC 20586 / JCM 3761 / NBRC 0622 / NRRL Y-65 / CBS 138) (Yeast).